Reading from the N-terminus, the 486-residue chain is BTB/POZ domain and ankyrin repeat-containing protein BOP (486 aa).

Positions Ser25 to Pro115 constitute a BTB domain. The segment at Arg121–Ser135 adopts a C2HC NPR-type zinc-finger fold. Positions 124, 129, 131, and 134 each coordinate Zn(2+). 4 ANK repeats span residues Gln257–Asp286, Glu287–Tyr316, Ala321–Val350, and Asp354–Leu388. Disordered stretches follow at residues Glu403–Ile442 and Gln464–Tyr486. 2 stretches are compositionally biased toward low complexity: residues Asn406 to Thr418 and Ser432 to Ile442. Basic and acidic residues predominate over residues Ser466–Asp475.

Belongs to the plant 'ANKYRIN-BTB/POZ' family. 'NOOT-BOP-COCH-like' (NBCL) subfamily. In terms of assembly, homodimer. Expressed in xylem vessels and parenchyma cells of pedicel vascular tissue in the abscission zone (AZ). Accumulates in developing root nodules and present in roots, especially in the upper part.

Its subcellular location is the nucleus. The protein localises to the cytoplasm. It localises to the cell membrane. It participates in protein modification; protein ubiquitination. Functionally, may act as a substrate-specific adapter of an E3 ubiquitin-protein ligase complex (CUL3-RBX1-BTB) which mediates the ubiquitination and subsequent proteasomal degradation of target proteins. Transcriptional co-regulator involved in promoting the fate and determination of leaf and flower meristems. Required for the abscission of senescent organs, probably by regulating the cell wall disorganization in abscission zones (AZs, e.g. pulvini at the base of leaves). Involved in the coordination of the symbiotic nodule developmental program; promotes the formation of root nodules by interacting directly with APP1 to modulate the expression of the nuclear transcription factor Y subunit (NF-YA1), a key nodulin. Necessary for the robust maintenance of nodule identity throughout the nodule developmental program. This chain is BTB/POZ domain and ankyrin repeat-containing protein BOP, found in Lupinus luteus (European yellow lupine).